Consider the following 355-residue polypeptide: UPF0421 protein BCE_2776 (355 aa).

4 helical membrane passes run 19-39, 74-94, 109-129, and 131-151; these read IAVFLTVLVCEFFNIPTIFAV, FTFFLGHQALSYALAAMFTIV, TLTAVAMIPITADHYFTAFLI, and LATTSTGIIVSTLVNFFILPP.

Belongs to the UPF0421 family.

The protein localises to the cell membrane. In Bacillus cereus (strain ATCC 10987 / NRS 248), this protein is UPF0421 protein BCE_2776.